A 237-amino-acid polypeptide reads, in one-letter code: Tyrosine-protein kinase YwqD (237 aa).

Tyrosine 228 carries the post-translational modification Phosphotyrosine; by autocatalysis.

The protein belongs to the CpsD/CapB family. Autophosphorylated in vitro, which inhibits ATPase activity. Dephosphorylated by YwqE in vitro.

The enzyme catalyses L-tyrosyl-[protein] + ATP = O-phospho-L-tyrosyl-[protein] + ADP + H(+). May be involved in the regulation of capsular polysaccharide biosynthesis. Autophosphorylates in vitro. Phosphorylates and activates in vitro two UDP-glucose dehydrogenases, YwqF and TuaD, as well as the DNA-binding proteins Ssb and SsbB. The polypeptide is Tyrosine-protein kinase YwqD (ywqD) (Bacillus subtilis (strain 168)).